A 369-amino-acid polypeptide reads, in one-letter code: Phosphoribosyl pyrophosphate synthase-associated protein 2 (369 aa).

Methionine 1 carries the post-translational modification N-acetylmethionine. Phosphoserine occurs at positions 219, 227, and 233.

The protein belongs to the ribose-phosphate pyrophosphokinase family. As to quaternary structure, binds to PRPS1 and PRPS2. Ubiquitous.

Functionally, seems to play a negative regulatory role in 5-phosphoribose 1-diphosphate synthesis. In Rattus norvegicus (Rat), this protein is Phosphoribosyl pyrophosphate synthase-associated protein 2 (Prpsap2).